The sequence spans 450 residues: C4-dicarboxylate transport protein (450 aa).

A run of 8 helical transmembrane segments spans residues 25-45, 56-76, 90-110, 162-182, 200-220, 234-254, 319-339, and 367-387; these read VVFA…YGAA, LIKM…IASM, MAYF…VANV, ILQV…VGDA, LVNI…AFTI, LVLT…GAVA, IYMT…LTLG, and AATL…ILGV.

Belongs to the dicarboxylate/amino acid:cation symporter (DAACS) (TC 2.A.23) family.

The protein localises to the cell inner membrane. Responsible for the transport of dicarboxylates such as succinate, fumarate, and malate from the periplasm across the membrane. This Acidovorax ebreus (strain TPSY) (Diaphorobacter sp. (strain TPSY)) protein is C4-dicarboxylate transport protein.